The primary structure comprises 460 residues: MDETTVNGGRRASDVVVFAFPRHGHMSPMLQFSKRLVSKGLRVTFLITTSATESLRLNLPPSSSLDLQVISDVPESNDIATLEGYLRSFKATVSKTLADFIDGIGNPPKFIVYDSVMPWVQEVARGRGLDAAPFFTQSSAVNHILNHVYGGSLSIPAPENTAVSLPSMPVLQAEDLPAFPDDPEVVMNFMTSQFSNFQDAKWIFFNTFDQLECKKQSQVVNWMADRWPIKTVGPTIPSAYLDDGRLEDDRAFGLNLLKPEDGKNTRQWQWLDSKDTASVLYISFGSLAILQEEQVKELAYFLKDTNLSFLWVLRDSELQKLPHNFVQETSHRGLVVNWCSQLQVLSHRAVSCFVTHCGWNSTLEALSLGVPMVAIPQWVDQTTNAKFVADVWRVGVRVKKKDERIVTKEELEASIRQVVQGEGRNEFKHNAIKWKKLAKEAVDEGGSSDKNIEEFVKTIA.

The Proton acceptor role is filled by His25. Asp114 functions as the Charge relay in the catalytic mechanism. 9 residues coordinate UDP-alpha-D-glucose: Ser286, Cys339, Gln341, Trp359, Asn360, Ser361, Glu364, Asp380, and Gln381.

Belongs to the UDP-glycosyltransferase family. Highly expressed in young fruits 15 days after anthesis (15-DAA).

It carries out the reaction mogrol + UDP-alpha-D-glucose = mogroside IE + UDP + H(+). The catalysed reaction is mogroside I-A1 + UDP-alpha-D-glucose = mogroside IIE + UDP + H(+). The enzyme catalyses mogroside II-A1 + UDP-alpha-D-glucose = mogroside IIIX + UDP + H(+). It catalyses the reaction mogroside II-A + UDP-alpha-D-glucose = mogroside III + UDP + H(+). It carries out the reaction mogroside III-A1 + UDP-alpha-D-glucose = siamenoside I + UDP + H(+). The protein operates within secondary metabolite biosynthesis; terpenoid biosynthesis. In terms of biological role, UDP-glycosyltransferase involved in the biosynthesis of cucurbitacin and mogroside tetracyclic triterpene natural products (e.g. siamenoside I and mogrosides IV, V and VI). Cucurbitacins have cytotoxic properties and exhibit deterrent taste as a defense barrier against herbivores. Mogrosides are nonsugar highly oxygenated compounds used as high-intensity zero-calorie sweeteners; they also possess pharmacological properties such as regulating immunity, lowering blood sugar and lipid levels, protecting the liver, and acting as antioxidants and antitumor agents. Catalyzes the C3 primary glucosylation of mogrol, mogroside I-A1, mogroside II-A1, mogroside II-A and mogroside III-A1. The sequence is that of Mogroside I-E synthase from Siraitia grosvenorii (Monk's fruit).